The following is a 49-amino-acid chain: YLDHGLGAPAPYPDPLEPRREVCELNPDCDELADHIGFQEAYRRFYGIA.

The 47-residue stretch at 1 to 47 folds into the Gla domain; sequence YLDHGLGAPAPYPDPLEPRREVCELNPDCDELADHIGFQEAYRRFYG. A Hydroxyproline modification is found at proline 9. Glutamate 17, glutamate 21, glutamate 24, and aspartate 30 together coordinate Ca(2+). 3 positions are modified to 4-carboxyglutamate: glutamate 17, glutamate 21, and glutamate 24. A disulfide bridge connects residues cysteine 23 and cysteine 29.

Belongs to the osteocalcin/matrix Gla protein family. Post-translationally, gamma-carboxyglutamate residues are formed by vitamin K dependent carboxylation by GGCX. These residues are essential for the binding of calcium. Decarboxylation promotes the hormone activity.

Its subcellular location is the secreted. Functionally, the carboxylated form is one of the main organic components of the bone matrix, which constitutes 1-2% of the total bone protein. It acts as a negative regulator of bone formation and is required to limit bone formation without impairing bone resorption or mineralization. The carboxylated form binds strongly to apatite and calcium. In terms of biological role, the uncarboxylated form acts as a hormone secreted by osteoblasts, which regulates different cellular processes, such as energy metabolism, male fertility and brain development. Regulates of energy metabolism by acting as a hormone favoring pancreatic beta-cell proliferation, insulin secretion and sensitivity and energy expenditure. Uncarboxylated osteocalcin hormone also promotes testosterone production in the testes: acts as a ligand for G protein-coupled receptor GPRC6A at the surface of Leydig cells, initiating a signaling response that promotes the expression of enzymes required for testosterone synthesis in a CREB-dependent manner. Also acts as a regulator of brain development: osteocalcin hormone crosses the blood-brain barrier and acts as a ligand for GPR158 on neurons, initiating a signaling response that prevents neuronal apoptosis in the hippocampus, favors the synthesis of all monoamine neurotransmitters and inhibits that of gamma-aminobutyric acid (GABA). Osteocalcin also crosses the placenta during pregnancy and maternal osteocalcin is required for fetal brain development. This Sus scrofa (Pig) protein is Osteocalcin (BGLAP).